The primary structure comprises 43 residues: Protein PsbN (43 aa).

A helical membrane pass occupies residues 7-27 (LIIFIASLLLGLTGYSIYTAF).

It belongs to the PsbN family.

It localises to the plastid. It is found in the chloroplast thylakoid membrane. Its function is as follows. May play a role in photosystem I and II biogenesis. In Guillardia theta (Cryptophyte), this protein is Protein PsbN.